A 165-amino-acid polypeptide reads, in one-letter code: Phosphopantetheine adenylyltransferase (165 aa).

Serine 10 is a substrate binding site. ATP-binding positions include 10–11 (SF) and histidine 18. Residues lysine 42, leucine 74, and arginine 88 each coordinate substrate. ATP is bound by residues 89–91 (GLR), glutamate 99, and 124–130 (WFYTSST).

This sequence belongs to the bacterial CoaD family. Homohexamer. It depends on Mg(2+) as a cofactor.

It localises to the cytoplasm. It carries out the reaction (R)-4'-phosphopantetheine + ATP + H(+) = 3'-dephospho-CoA + diphosphate. The protein operates within cofactor biosynthesis; coenzyme A biosynthesis; CoA from (R)-pantothenate: step 4/5. Reversibly transfers an adenylyl group from ATP to 4'-phosphopantetheine, yielding dephospho-CoA (dPCoA) and pyrophosphate. The sequence is that of Phosphopantetheine adenylyltransferase from Syntrophus aciditrophicus (strain SB).